Reading from the N-terminus, the 733-residue chain is Zinc finger protein indra (733 aa).

Positions 17 to 91 (VRCDHCGTSQ…RETVDRVQEQ (75 aa)) constitute a ZAD domain. Zn(2+) is bound by residues C19, C22, C64, and C67. Over residues 90–100 (EQPAKKTKVAE) the composition is skewed to basic and acidic residues. Residues 90-121 (EQPAKKTKVAEIEEPSTQESDKKAVKVPKKNT) are disordered. Phosphoserine is present on residues S109, S153, and S176. 2 positions are modified to phosphothreonine: T180 and T188. 2 consecutive C2H2-type zinc fingers follow at residues 228-251 (FQCP…QKEH) and 259-282 (YPCT…RDTH). Residues 285-316 (TFESEAKTKAKESKEKEAKSGAKNKIDAKAKE) are compositionally biased toward basic and acidic residues. The segment at 285 to 336 (TFESEAKTKAKESKEKEAKSGAKNKIDAKAKETNAVSQRKKPKEKKSKEKKT) is disordered. 2 consecutive C2H2-type zinc fingers follow at residues 416–439 (FQCE…KTVH) and 447–469 (FKCH…MTLH). 2 disordered regions span residues 499 to 525 (IENT…FTNR) and 540 to 622 (AFKT…SSDV). Residues 592–602 (SVSTTNGNSPA) show a composition bias toward polar residues. Residues S600, S642, and S646 each carry the phosphoserine modification. T647 carries the post-translational modification Phosphothreonine. 2 C2H2-type zinc fingers span residues 653–676 (LSCD…EKKH) and 708–733 (LPCG…RKRH). At S654 the chain carries Phosphoserine.

The protein belongs to the krueppel C2H2-type zinc-finger protein family.

The protein resides in the nucleus. Its subcellular location is the nucleolus. Required for rDNA copy number maintenance and non-random sister chromatid segregation (NRSS) following unequal sister chromatid exchange. Binds ribosomal DNA (rDNA) preferentially binding to intergenic spacers (IGS) regions on both X and Y chromosomes. Essential for NRSS, a mechanism which contributes to the recovery and maintenance of inherently unstable rDNA copy numbers so that the integrity of the germline genome is upheld over generations and germline immortality is sustained. May be involved in transcriptional regulation. The chain is Zinc finger protein indra from Drosophila melanogaster (Fruit fly).